A 440-amino-acid polypeptide reads, in one-letter code: Polycomb group protein VERNALIZATION 2 (440 aa).

A C2H2-type zinc finger spans residues 86–111 (EDCSCPFCSMLCGSFKGLQFHLNSSH). The Nuclear localization signal motif lies at 156–163 (KPRKRRQR). The tract at residues 267-345 (RQFYHSHRVQ…GHISWACEVF (79 aa)) is VEFS-box. A disordered region spans residues 398-440 (NNNNNSVDHPSDSNTNNNNIVDHPNDIKNKNNVDNKDNNSRDK). Over residues 420–440 (HPNDIKNKNNVDNKDNNSRDK) the composition is skewed to basic and acidic residues.

Belongs to the VEFS (VRN2-EMF2-FIS2-SU(Z)12) family. As to quaternary structure, probable component of a PcG complex. In plants, PcG complexes are probably composed of a member of the EZ family (CLF or MEA), FIE, and a member of the VEFS family (FIS2, VRN2 or EMF2). Component of the plant homeodomain / polycomb repressive complex 2 (PHD-PRC2) large complex during prolonged cold, composed of core PRC2 components (VRN2, EZA1, FIE and MSI1), and three related PHD finger proteins (VIL1, VIL2 and VIN3) that mediates histone H3 trimethylation on 'Lys-27' (H3K27me3). Binds to ALP1. In terms of tissue distribution, weakly expressed. Expressed both during, and in the absence of vernalization.

It is found in the nucleus. Functionally, polycomb group (PcG) protein. Plays a central role in vernalization by maintaining repressed the homeotic gene FLC, a floral repressor, after a cold treatment. PcG proteins act by forming multiprotein complexes, which are required to maintain the transcriptionally repressive state of homeotic genes throughout development. PcG proteins are not required to initiate repression, but to maintain it during later stages of development. They probably act via the methylation of histones, rendering chromatin heritably changed in its expressibility. Associates constitutively along the whole FLC locus. The sequence is that of Polycomb group protein VERNALIZATION 2 (VRN2) from Arabidopsis thaliana (Mouse-ear cress).